The primary structure comprises 108 residues: VQ motif-containing protein 10 (108 aa).

Positions 29–38 match the VQ motif; the sequence is FKTVVQELTG. The disordered stretch occupies residues 65-85; it reads IGEDTRQLHGGGGGGGRMGTT. Residues 73–82 show a composition bias toward gly residues; the sequence is HGGGGGGGRM.

As to quaternary structure, interacts with WRKY25, WRKY26 and WRKY33.

The protein resides in the nucleus. May modulate WRKY transcription factor activities. This Arabidopsis thaliana (Mouse-ear cress) protein is VQ motif-containing protein 10.